We begin with the raw amino-acid sequence, 237 residues long: UPF0280 protein Mthe_1297 (237 aa).

It belongs to the UPF0280 family.

The chain is UPF0280 protein Mthe_1297 from Methanothrix thermoacetophila (strain DSM 6194 / JCM 14653 / NBRC 101360 / PT) (Methanosaeta thermophila).